The primary structure comprises 468 residues: Dihydrolipoyl dehydrogenase (468 aa).

Residues 39-47 (EKGNLGGVC), Lys-56, and Ala-119 contribute to the FAD site. A disulfide bond links Cys-47 and Cys-52. Residues 183 to 187 (GGGYI), Glu-206, and 271 to 274 (TVGR) each bind NAD(+). The FAD site is built by Asp-314 and Ala-322. His-446 (proton acceptor) is an active-site residue.

Belongs to the class-I pyridine nucleotide-disulfide oxidoreductase family. As to quaternary structure, homodimer. FAD is required as a cofactor.

The protein localises to the cytoplasm. It localises to the membrane. The catalysed reaction is N(6)-[(R)-dihydrolipoyl]-L-lysyl-[protein] + NAD(+) = N(6)-[(R)-lipoyl]-L-lysyl-[protein] + NADH + H(+). Its function is as follows. Lipoamide dehydrogenase is a component of the alpha-ketoacid dehydrogenase complexes. The chain is Dihydrolipoyl dehydrogenase (pdhD) from Staphylococcus aureus (strain COL).